The sequence spans 328 residues: GMP reductase (328 aa).

C176 (thioimidate intermediate) is an active-site residue. I205–V228 lines the NADP(+) pocket.

It belongs to the IMPDH/GMPR family. GuaC type 2 subfamily.

The catalysed reaction is IMP + NH4(+) + NADP(+) = GMP + NADPH + 2 H(+). Catalyzes the irreversible NADPH-dependent deamination of GMP to IMP. It functions in the conversion of nucleobase, nucleoside and nucleotide derivatives of G to A nucleotides, and in maintaining the intracellular balance of A and G nucleotides. The protein is GMP reductase of Bacillus cereus (strain ATCC 14579 / DSM 31 / CCUG 7414 / JCM 2152 / NBRC 15305 / NCIMB 9373 / NCTC 2599 / NRRL B-3711).